A 397-amino-acid polypeptide reads, in one-letter code: MKRFKRAGAIIETLKEHGHEAYFVGGSVRDFIIDRPIGDIDIATSALPEEVMKLFPKHVPVGLEHGTVIVLQDGEPYEVTTFRTESDYEDFRRPSSVQFVRSLEEDLKRRDFTMNAIAMNEDGEIIDLFGGQEAIQKREIVTVGNAAERFQEDALRMMRGIRFVSTLGFSLEEKTECAIKRYGHLLEHIAIERITVEFEKLLTGPYCVKGLQKLVETKLFMHLPYLQMSEEKILKAAEYNWESFETEIEAWAFFLSCIGEEHPSVFLRQWKFSNKKIKEIVAVLLAIRTRKTKEWDAVFLYQTGVQIALMAERVYQVMIEEYNMSTVSEVQRLFDSLPIQKRQEMNVSGNDLLSWTDKTPGPWVAEVLQKIEEEILQKRLENEKEAIRGWIEECNLL.

Residues G26 and R29 each contribute to the ATP site. The CTP site is built by G26 and R29. The Mg(2+) site is built by D39 and D41. ATP-binding residues include R110, D153, R156, R159, and R162. Residues R110, D153, R156, R159, and R162 each contribute to the CTP site.

This sequence belongs to the tRNA nucleotidyltransferase/poly(A) polymerase family. Bacterial CCA-adding enzyme type 3 subfamily. In terms of assembly, homodimer. Mg(2+) is required as a cofactor.

The catalysed reaction is a tRNA precursor + 2 CTP + ATP = a tRNA with a 3' CCA end + 3 diphosphate. The enzyme catalyses a tRNA with a 3' CCA end + 2 CTP + ATP = a tRNA with a 3' CCACCA end + 3 diphosphate. Functionally, catalyzes the addition and repair of the essential 3'-terminal CCA sequence in tRNAs without using a nucleic acid template. Adds these three nucleotides in the order of C, C, and A to the tRNA nucleotide-73, using CTP and ATP as substrates and producing inorganic pyrophosphate. tRNA 3'-terminal CCA addition is required both for tRNA processing and repair. Also involved in tRNA surveillance by mediating tandem CCA addition to generate a CCACCA at the 3' terminus of unstable tRNAs. While stable tRNAs receive only 3'-terminal CCA, unstable tRNAs are marked with CCACCA and rapidly degraded. The sequence is that of CCA-adding enzyme from Bacillus cytotoxicus (strain DSM 22905 / CIP 110041 / 391-98 / NVH 391-98).